The following is a 478-amino-acid chain: 7-dehydrocholesterol reductase (478 aa).

A disordered region spans residues 1 to 28 (MMASDRVRKRHKGSANGAQTVEKEPSKE). Helical transmembrane passes span 43 to 63 (LSGV…FIMA), 97 to 117 (WAAA…YMCV), 180 to 200 (WIPL…FAFI), 269 to 289 (VTNS…DFFW), 309 to 329 (LGWG…LYLV), and 333 to 353 (IQLS…GYYI). Residues lysine 361, arginine 365, methionine 398, tryptophan 403, and 410–411 (NY) contribute to the NADP(+) site. A helical membrane pass occupies residues 424 to 444 (ACGGNHLLPYFYIIYMTILLV). NADP(+) is bound by residues aspartate 450, 454–458 (CSNKY), and tyrosine 465.

It belongs to the ERG4/ERG24 family.

The protein localises to the endoplasmic reticulum membrane. It catalyses the reaction cholesterol + NADP(+) = 7-dehydrocholesterol + NADPH + H(+). The enzyme catalyses 7-dehydrodesmosterol + NADPH + H(+) = desmosterol + NADP(+). Its pathway is steroid biosynthesis; cholesterol biosynthesis. Functionally, catalyzes the last step of the cholesterol synthesis pathway, which transforms cholesta-5,7-dien-3beta-ol (7-dehydrocholesterol,7-DHC) into cholesterol by reducing the C7-C8 double bond of its sterol core. Can also metabolize cholesta-5,7,24-trien-3beta-ol (7-dehydrodemosterol, 7-DHD) to desmosterol, which is then metabolized by the Delta(24)-sterol reductase (DHCR24) to cholesterol. Modulates ferroptosis (a form of regulated cell death driven by iron-dependent lipid peroxidation) through the metabolic breakdown of the anti-ferroptotic metabolites 7-DHC and 7-DHD which, when accumulated, divert the propagation of peroxyl radical-mediated damage from phospholipid components to its sterol core, protecting plasma and mitochondrial membranes from phospholipid autoxidation. The polypeptide is 7-dehydrocholesterol reductase (dhcr7) (Danio rerio (Zebrafish)).